Reading from the N-terminus, the 598-residue chain is Kinetochore-associated protein KNL-2 homolog (598 aa).

In terms of domain architecture, SANTA spans 19 to 111; it reads VVLRDWWLIK…IFGFPPCWER (93 aa). 2 stretches are compositionally biased toward basic and acidic residues: residues 335–344 and 371–381; these read AKSSKPEKKG and KSAENKRKIDA. 4 disordered regions span residues 335–403, 445–500, 520–542, and 572–598; these read AKSS…NNAK, KESL…EEAE, PEKKVKQQKTNAASTDSLGQKRS, and KDGSETNSAPSKGKGSDSRKRRNLKIK. Polar residues predominate over residues 383–392; that stretch reads KLQSPTSNVA. Residues 527 to 539 are compositionally biased toward polar residues; that stretch reads QKTNAASTDSLGQ. The segment at 538–572 is required for localization at centromeres; that stretch reads GQKRSRSGRVLVSSLEFWRNQIPVYDMDRNLIQVK.

Belongs to the KNL2 family. As to expression, expressed in shoot apical meristem, leaf primordia, basal parts of emerging leaves, inflorescence meristems, young inflorescences, developing flower buds, developing sepals and pistils, styles and young siliques.

Its subcellular location is the nucleus. The protein localises to the nucleoplasm. It localises to the nuclear body. It is found in the nucleolus. The protein resides in the chromosome. Its subcellular location is the centromere. Its function is as follows. Involved in recognition of centromeres and centromeric localization of the centromere-specific histone CENH3. Required for normal progression of mitosis and meiosis. May play a role in the determination of the epigenetic status of centromeres. Binds DNA and RNA in vitro. This is Kinetochore-associated protein KNL-2 homolog from Arabidopsis thaliana (Mouse-ear cress).